Consider the following 54-residue polypeptide: uncharacterized protein (54 aa).

The segment at 13–54 (VAGDSGGNPENISIGTTSGAVVNKGPEQIPKKKKEESKEKEE) is disordered. Residues 20 to 32 (NPENISIGTTSGA) are compositionally biased toward polar residues. The span at 41 to 54 (IPKKKKEESKEKEE) shows a compositional bias: basic and acidic residues.

This is an uncharacterized protein from Enterobacteria phage T4 (Bacteriophage T4).